Consider the following 61-residue polypeptide: Cobrotoxin-c (61 aa).

Disulfide bonds link C3/C23, C17/C40, C42/C53, and C54/C59.

This sequence belongs to the three-finger toxin family. Short-chain subfamily. Type I alpha-neurotoxin sub-subfamily. Expressed by the venom gland.

The protein resides in the secreted. Its function is as follows. Produces peripheral paralysis by blocking neuromuscular transmission at the postsynaptic site. Binds to the nicotinic acetylcholine receptor. This Naja kaouthia (Monocled cobra) protein is Cobrotoxin-c.